A 418-amino-acid chain; its full sequence is uncharacterized protein (418 aa).

10 helical membrane passes run 51 to 71 (FVMA…GALV), 79 to 99 (ALVV…PLFA), 110 to 130 (VTGI…LGAV), 163 to 183 (FFGP…SVLA), 224 to 244 (VIFG…LPLV), 258 to 278 (ALMS…AYVV), 289 to 309 (PIFL…TLSD), 315 to 335 (VGVQ…FPLV), 356 to 376 (ATGI…VVAG), and 379 to 399 (AAFM…LVAM).

It belongs to the major facilitator superfamily.

The protein localises to the cell membrane. This is an uncharacterized protein from Mycobacterium tuberculosis (strain CDC 1551 / Oshkosh).